Here is a 498-residue protein sequence, read N- to C-terminus: ATP synthase subunit beta, chloroplastic (498 aa).

ATP is bound at residue 172-179 (GGAGVGKT).

This sequence belongs to the ATPase alpha/beta chains family. In terms of assembly, F-type ATPases have 2 components, CF(1) - the catalytic core - and CF(0) - the membrane proton channel. CF(1) has five subunits: alpha(3), beta(3), gamma(1), delta(1), epsilon(1). CF(0) has four main subunits: a(1), b(1), b'(1) and c(9-12).

The protein localises to the plastid. The protein resides in the chloroplast thylakoid membrane. It catalyses the reaction ATP + H2O + 4 H(+)(in) = ADP + phosphate + 5 H(+)(out). Its function is as follows. Produces ATP from ADP in the presence of a proton gradient across the membrane. The catalytic sites are hosted primarily by the beta subunits. This chain is ATP synthase subunit beta, chloroplastic, found in Agrostis stolonifera (Creeping bentgrass).